Consider the following 1134-residue polypeptide: Tetrathionate reductase subunit A (1134 aa).

Positions 1–31 (MQLSRRDFIKGLVAVGSASVFLAGYSETVDR) form a signal peptide, tat-type signal. A 4Fe-4S Mo/W bis-MGD-type domain is found at 46-133 (GRIVHSACLG…DGIHYLYDPY (88 aa)). Residues C53, C56, C60, and C119 each contribute to the [4Fe-4S] cluster site.

The protein belongs to the prokaryotic molybdopterin-containing oxidoreductase family. In terms of assembly, probably composed of three subunits: TtrA, TtrB and TtrC. Precursor interacts with TtrD. It depends on [4Fe-4S] cluster as a cofactor. Requires Mo-bis(molybdopterin guanine dinucleotide) as cofactor. Exported by the Tat system. The position of the signal peptide cleavage has not been experimentally proven.

The protein resides in the cell membrane. Part of a membrane-bound tetrathionate reductase that catalyzes the reduction of tetrathionate to thiosulfate. TtrA is the catalytic subunit. In Archaeoglobus fulgidus (strain ATCC 49558 / DSM 4304 / JCM 9628 / NBRC 100126 / VC-16), this protein is Tetrathionate reductase subunit A (ttrA).